A 55-amino-acid chain; its full sequence is Photosystem I reaction center subunit IX (55 aa).

A helical membrane pass occupies residues 7–27 (YLSVAPVLSTLWFGSLAGLLI).

Belongs to the PsaJ family.

The protein resides in the plastid. It localises to the chloroplast thylakoid membrane. Functionally, may help in the organization of the PsaE and PsaF subunits. The polypeptide is Photosystem I reaction center subunit IX (Gossypium barbadense (Sea Island cotton)).